A 467-amino-acid polypeptide reads, in one-letter code: Dimethylamine methyltransferase MtbB2 (467 aa).

A non-standard amino acid (pyrrolysine) is located at residue pyrrolysine 356.

This sequence belongs to the dimethylamine methyltransferase family.

The enzyme catalyses Co(I)-[dimethylamine-specific corrinoid protein] + dimethylamine + H(+) = methyl-Co(III)-[dimethylamine-specific corrinoid protein] + methylamine. The protein operates within one-carbon metabolism; methanogenesis from dimethylamine. Its function is as follows. Catalyzes the transfer of a methyl group from dimethylamine to the corrinoid cofactor of MtbC. This Methanosarcina barkeri (strain Fusaro / DSM 804) protein is Dimethylamine methyltransferase MtbB2 (mtbB2).